Reading from the N-terminus, the 584-residue chain is Interferon regulatory factor 2-binding protein 1 (584 aa).

Positions 59 to 120 are disordered; it reads HVLPEGRSPG…RYDRATSSSR (62 aa). The residue at position 66 (serine 66) is a Phosphoserine. Over residues 82–100 the composition is skewed to low complexity; the sequence is STGSQGSQLPPPQAQAQPS. At serine 125 the chain carries Phosphoserine. Arginine 177 bears the Omega-N-methylarginine mark. At serine 186 the chain carries Phosphoserine. Residues 197 to 217 are a coiled coil; sequence EKEKQQRNADCLAELNEAMRG. Lysine 227 is covalently cross-linked (Glycyl lysine isopeptide (Lys-Gly) (interchain with G-Cter in SUMO2)). 2 disordered regions span residues 346–421 and 433–495; these read PAEA…GVPS and LGHS…GTGA. The span at 354-369 shows a compositional bias: pro residues; sequence YPEPAPAALCGPPPRA. Residues serine 371, serine 384, serine 421, and serine 436 each carry the phosphoserine modification. A Glycyl lysine isopeptide (Lys-Gly) (interchain with G-Cter in SUMO2) cross-link involves residue lysine 438. Positions 449 to 458 are enriched in low complexity; sequence AGGASPAASS. Serine 453 and serine 457 each carry phosphoserine. An RING-type; degenerate zinc finger spans residues 503 to 550; sequence CTLCRERLEDTHFVQCPSVPGHKFCFPCSREFIKAQGPAGEVYCPSGD. The segment at 503-550 is cys-rich; the sequence is CTLCRERLEDTHFVQCPSVPGHKFCFPCSREFIKAQGPAGEVYCPSGD.

This sequence belongs to the IRF2BP family. As to quaternary structure, interacts with IRF2. Part of a corepressor complex containing IRF2 and IRF2BP2. Interacts with JDP2.

Its subcellular location is the nucleus. It carries out the reaction S-ubiquitinyl-[E2 ubiquitin-conjugating enzyme]-L-cysteine + [acceptor protein]-L-lysine = [E2 ubiquitin-conjugating enzyme]-L-cysteine + N(6)-ubiquitinyl-[acceptor protein]-L-lysine.. Acts as a transcriptional corepressor in a IRF2-dependent manner; this repression is not mediated by histone deacetylase activities. May act as an E3 ligase towards JDP2, enhancing its polyubiquitination. Represses ATF2-dependent transcriptional activation. This Mus musculus (Mouse) protein is Interferon regulatory factor 2-binding protein 1 (Irf2bp1).